A 422-amino-acid polypeptide reads, in one-letter code: MLQWRRRHCCFAKMTWNAKRSLFRTHLIGVLSLVFLFAMFLFFNHHDWLPGRAGFKENPVTYTFRGFRSTKSETNHSSLRNIWKETVPQTLRPQTATNSNNTDLSPQGVTGLENTLSANGSIYNEKGTGHPNSYHFKYIINEPEKCQEKSPFLILLIAAEPGQIEARRAIRQTWGNESLAPGIQITRIFLLGLSIKLNGYLQRAILEESRQYHDIIQQEYLDTYYNLTIKTLMGMNWVATYCPHIPYVMKTDSDMFVNTEYLINKLLKPDLPPRHNYFTGYLMRGYAPNRNKDSKWYMPPDLYPSERYPVFCSGTGYVFSGDLAEKIFKVSLGIRRLHLEDVYVGICLAKLRIDPVPPPNEFVFNHWRVSYSSCKYSHLITSHQFQPSELIKYWNHLQQNKHNACANAAKEKAGRYRHRKLH.

Residues Met-1–Arg-24 lie on the Cytoplasmic side of the membrane. A helical; Signal-anchor for type II membrane protein transmembrane segment spans residues Thr-25–His-45. Topologically, residues His-46–His-422 are lumenal. N-linked (GlcNAc...) asparagine glycans are attached at residues Asn-75, Asn-100, Asn-119, Asn-176, and Asn-226. The segment at Thr-90–Thr-110 is disordered.

This sequence belongs to the glycosyltransferase 31 family. Mn(2+) serves as cofactor. In terms of tissue distribution, detected in heart and brain.

It is found in the golgi apparatus membrane. The enzyme catalyses an N-acetyl-beta-D-glucosaminyl derivative + UDP-alpha-D-galactose = a beta-D-galactosyl-(1-&gt;3)-N-acetyl-beta-D-glucosaminyl derivative + UDP + H(+). The catalysed reaction is a beta-D-GlcNAc-(1-&gt;3)-beta-D-Gal-(1-&gt;4)-beta-D-Glc-(1&lt;-&gt;1)-Cer(d18:1(4E)) + UDP-alpha-D-galactose = a beta-D-Gal-(1-&gt;3)-beta-D-GlcNAc-(1-&gt;3)-beta-D-Gal-(1-&gt;4)-beta-D-Glc-(1&lt;-&gt;1')-Cer(d18:1(4E)) + UDP + H(+). It catalyses the reaction a neolactoside IV(3)-beta-GlcNAc-nLc4Cer(d18:1(4E)) + UDP-alpha-D-galactose = a neolactoside IV(3)-beta-[Gal-beta-(1-&gt;3)-GlcNAc]-nLc4Cer(d18:1(4E)) + UDP + H(+). It functions in the pathway protein modification; protein glycosylation. Functionally, beta-1,3-galactosyltransferase that transfers galactose from UDP-galactose to substrates with a terminal beta-N-acetylglucosamine (beta-GlcNAc) residue. Can also utilize substrates with a terminal galactose residue, albeit with lower efficiency. Involved in the biosynthesis of the carbohydrate moieties of glycolipids and glycoproteins. Inactive towards substrates with terminal alpha-N-acetylglucosamine (alpha-GlcNAc) or alpha-N-acetylgalactosamine (alpha-GalNAc) residues. The polypeptide is Beta-1,3-galactosyltransferase 2 (Homo sapiens (Human)).